A 454-amino-acid polypeptide reads, in one-letter code: Macrophage scavenger receptor types I and II (454 aa).

Residues 1-22 (MAQWDSFTDQQEDTDSCSESVK) form a disordered region. Over 1-50 (MAQWDSFTDQQEDTDSCSESVKFDARSNTALLPPNPKNGPPLQEKLKSFK) the chain is Cytoplasmic. Residue S27 is modified to Phosphoserine. The chain crosses the membrane as a helical; Signal-anchor for type II membrane protein span at residues 51-73 (AALIALYLLVFAVLIPIIAIMAA). A spacer region spans residues 74–109 (QLLKWEMKNCTVGSINANSVSSSLLGRGNDSEHEVR). Residues 74–454 (QLLKWEMKNC…GEDAGVTCTL (381 aa)) lie on the Extracellular side of the membrane. Residues N82, N102, N143, N184, N221, N249, and N267 are each glycosylated (N-linked (GlcNAc...) asparagine). A coiled-coil region spans residues 199–256 (VKFQENTLKGQEEISKLKERVHNASAEIMSMKEEQVHLEQEIKREVKVLNNITNDLRL). The disordered stretch occupies residues 267-347 (NITLIQGPPG…KGEKGSGSIL (81 aa)). Residues 273 to 344 (GPPGPPGEKG…KGQKGEKGSG (72 aa)) enclose the Collagen-like domain. The 101-residue stretch at 353–453 (VRLVGGRGPH…HGEDAGVTCT (101 aa)) folds into the SRCR domain. Disulfide bonds link C378–C442, C391–C452, and C422–C432.

As to quaternary structure, homotrimer. Interacts with MYO18A.

The protein localises to the membrane. Membrane glycoproteins implicated in the pathologic deposition of cholesterol in arterial walls during atherogenesis. Two types of receptor subunits exist. These receptors mediate the endocytosis of a diverse group of macromolecules, including modified low density lipoproteins (LDL). The polypeptide is Macrophage scavenger receptor types I and II (MSR1) (Oryctolagus cuniculus (Rabbit)).